We begin with the raw amino-acid sequence, 161 residues long: NADH-quinone oxidoreductase subunit I (161 aa).

2 consecutive 4Fe-4S ferredoxin-type domains span residues 52 to 82 (LRRY…IESS) and 92 to 121 (TRYD…QGPN). 8 residues coordinate [4Fe-4S] cluster: C62, C65, C68, C72, C101, C104, C107, and C111.

The protein belongs to the complex I 23 kDa subunit family. In terms of assembly, NDH-1 is composed of 14 different subunits. Subunits NuoA, H, J, K, L, M, N constitute the membrane sector of the complex. [4Fe-4S] cluster serves as cofactor.

It localises to the cell inner membrane. It carries out the reaction a quinone + NADH + 5 H(+)(in) = a quinol + NAD(+) + 4 H(+)(out). In terms of biological role, NDH-1 shuttles electrons from NADH, via FMN and iron-sulfur (Fe-S) centers, to quinones in the respiratory chain. The immediate electron acceptor for the enzyme in this species is believed to be ubiquinone. Couples the redox reaction to proton translocation (for every two electrons transferred, four hydrogen ions are translocated across the cytoplasmic membrane), and thus conserves the redox energy in a proton gradient. The polypeptide is NADH-quinone oxidoreductase subunit I (Pelagibacter ubique (strain HTCC1062)).